We begin with the raw amino-acid sequence, 85 residues long: U4-theraphotoxin-Hhn1a (85 aa).

An N-terminal signal peptide occupies residues 1-22 (MKVTLIAILTCAAVLVLHTTAA). Positions 23-48 (EELEAESQPMEVGMPDTELAAVDEER) are excised as a propeptide. Disulfide bonds link Cys52-Cys66, Cys56-Cys77, and Cys71-Cys82.

The protein belongs to the neurotoxin 12 (Hwtx-2) family. 02 (Hwtx-2) subfamily. Monomer. Expressed by the venom gland.

Its subcellular location is the secreted. Its function is as follows. Neurotoxin active on both insects and mammals. In Cyriopagopus hainanus (Chinese bird spider), this protein is U4-theraphotoxin-Hhn1a.